A 404-amino-acid chain; its full sequence is Tryptophan synthase beta chain (404 aa).

Position 98 is an N6-(pyridoxal phosphate)lysine (Lys98).

The protein belongs to the TrpB family. In terms of assembly, tetramer of two alpha and two beta chains. The cofactor is pyridoxal 5'-phosphate.

It catalyses the reaction (1S,2R)-1-C-(indol-3-yl)glycerol 3-phosphate + L-serine = D-glyceraldehyde 3-phosphate + L-tryptophan + H2O. It functions in the pathway amino-acid biosynthesis; L-tryptophan biosynthesis; L-tryptophan from chorismate: step 5/5. The beta subunit is responsible for the synthesis of L-tryptophan from indole and L-serine. The polypeptide is Tryptophan synthase beta chain (Rhodopseudomonas palustris (strain BisA53)).